A 379-amino-acid polypeptide reads, in one-letter code: Cell division protein FtsZ (379 aa).

Residues 18-22 (GGGVN), 105-107 (GTG), E136, R140, and D184 contribute to the GTP site.

The protein belongs to the FtsZ family. Homodimer. Polymerizes to form a dynamic ring structure in a strictly GTP-dependent manner. Interacts directly with several other division proteins.

The protein localises to the cytoplasm. Its function is as follows. Essential cell division protein that forms a contractile ring structure (Z ring) at the future cell division site. The regulation of the ring assembly controls the timing and the location of cell division. One of the functions of the FtsZ ring is to recruit other cell division proteins to the septum to produce a new cell wall between the dividing cells. Binds GTP and shows GTPase activity. The sequence is that of Cell division protein FtsZ from Mycobacterium leprae (strain TN).